Consider the following 601-residue polypeptide: Probable cytochrome P450 525A1 (601 aa).

A helical transmembrane segment spans residues 12-32; sequence ISYFLTCSIFGFILWILTEQI. A disordered region spans residues 205 to 253; it reads NNNNNNNNNNNNNNNNNNNNNNNNNNNNNNNNNNNNNNNNNNNNNNNNN. C544 provides a ligand contact to heme.

Belongs to the cytochrome P450 family. Heme is required as a cofactor.

The protein localises to the membrane. The chain is Probable cytochrome P450 525A1 (cyp525A1) from Dictyostelium discoideum (Social amoeba).